A 469-amino-acid chain; its full sequence is Uronate isomerase (469 aa).

The protein belongs to the metallo-dependent hydrolases superfamily. Uronate isomerase family.

It catalyses the reaction D-glucuronate = D-fructuronate. The enzyme catalyses aldehydo-D-galacturonate = keto-D-tagaturonate. The protein operates within carbohydrate metabolism; pentose and glucuronate interconversion. The sequence is that of Uronate isomerase from Corynebacterium efficiens (strain DSM 44549 / YS-314 / AJ 12310 / JCM 11189 / NBRC 100395).